The following is a 714-amino-acid chain: G protein-coupled receptor kinase 2 (714 aa).

Residues 1-308 (MELENIVANT…LEAQPITYKT (308 aa)) form an N-terminal region. 2 consecutive RGS domains span residues 53-174 (YGYV…SQHS) and 177-294 (INHK…HRYL). A disordered region spans residues 141 to 229 (SNANPTETAE…GGGEGGGGGK (89 aa)). Low complexity predominate over residues 154–175 (CNNTTANNCNNINNSNNSQHSS). Composition is skewed to basic and acidic residues over residues 176 to 190 (DINH…HNGD) and 199 to 220 (HQDD…EKGG). The Protein kinase domain occupies 309–574 (FRMYRVLGKG…GQDVMAHPFF (266 aa)). ATP-binding positions include 315-323 (LGKGGFGEV) and K338. Residue D435 is the Proton acceptor of the active site. In terms of domain architecture, AGC-kinase C-terminal spans 577 to 642 (TQLNWRRLEA…GSVSISWQNE (66 aa)). A Phosphoserine modification is found at S612. A Phosphothreonine modification is found at T613. Residues 667 to 714 (INAAPEPDKAGCFPFRRKKKQPARTQPIPIPEHLLTTSHSVSSTTVES) form a disordered region. Residues 698-714 (EHLLTTSHSVSSTTVES) show a composition bias toward low complexity.

Belongs to the protein kinase superfamily. AGC Ser/Thr protein kinase family. GPRK subfamily. Expressed in all larval tissues and in adult ovaries. Larval CNS staining is localized to axons projecting to the optic lobes and the mushroom bodies, in the longitudinal connectives, and in cell bodies and nerves of the ring gland corpus allatum. Adult CNS staining is detectable only in cell bodies and processes associated with the ellipsoid body of the central complex and portions of the mushroom bodies. In the wing disk, expression is confined to a stripe that parallels the anterior/posterior boundary of the wing blade and the hinge region, and weak expression in the prospective notum.

The protein localises to the membrane. The enzyme catalyses [G-protein-coupled receptor] + ATP = [G-protein-coupled receptor]-phosphate + ADP + H(+). Functionally, specifically phosphorylates the activated forms of G protein-coupled receptors. Required during oogenesis and embryogenesis; component of a signaling pathway that functions during egg chamber maturation. The chain is G protein-coupled receptor kinase 2 (Gprk2) from Drosophila melanogaster (Fruit fly).